A 311-amino-acid chain; its full sequence is Malate dehydrogenase (311 aa).

Residues glycine 7–glycine 13 and aspartate 34 each bind NAD(+). 2 residues coordinate substrate: arginine 81 and arginine 87. NAD(+)-binding positions include asparagine 94 and isoleucine 117 to asparagine 119. Positions 119 and 153 each coordinate substrate. Catalysis depends on histidine 177, which acts as the Proton acceptor. Methionine 227 lines the NAD(+) pocket.

This sequence belongs to the LDH/MDH superfamily. MDH type 1 family. As to quaternary structure, homodimer.

The enzyme catalyses (S)-malate + NAD(+) = oxaloacetate + NADH + H(+). In terms of biological role, catalyzes the reversible oxidation of malate to oxaloacetate. This Shewanella denitrificans (strain OS217 / ATCC BAA-1090 / DSM 15013) protein is Malate dehydrogenase.